The sequence spans 385 residues: A-type ATP synthase subunit C (385 aa).

Belongs to the V-ATPase V0D/AC39 subunit family. Has multiple subunits with at least A(3), B(3), C, D, E, F, H, I and proteolipid K(x).

It is found in the cell membrane. Functionally, component of the A-type ATP synthase that produces ATP from ADP in the presence of a proton gradient across the membrane. In Methanosphaera stadtmanae (strain ATCC 43021 / DSM 3091 / JCM 11832 / MCB-3), this protein is A-type ATP synthase subunit C.